The sequence spans 271 residues: Thiazole synthase (271 aa).

Lysine 104 serves as the catalytic Schiff-base intermediate with DXP. Residues glycine 165, 192–193, and 214–215 contribute to the 1-deoxy-D-xylulose 5-phosphate site; these read AG and NT.

The protein belongs to the ThiG family. As to quaternary structure, homotetramer. Forms heterodimers with either ThiH or ThiS.

Its subcellular location is the cytoplasm. It catalyses the reaction [ThiS sulfur-carrier protein]-C-terminal-Gly-aminoethanethioate + 2-iminoacetate + 1-deoxy-D-xylulose 5-phosphate = [ThiS sulfur-carrier protein]-C-terminal Gly-Gly + 2-[(2R,5Z)-2-carboxy-4-methylthiazol-5(2H)-ylidene]ethyl phosphate + 2 H2O + H(+). It participates in cofactor biosynthesis; thiamine diphosphate biosynthesis. Functionally, catalyzes the rearrangement of 1-deoxy-D-xylulose 5-phosphate (DXP) to produce the thiazole phosphate moiety of thiamine. Sulfur is provided by the thiocarboxylate moiety of the carrier protein ThiS. In vitro, sulfur can be provided by H(2)S. The polypeptide is Thiazole synthase (Burkholderia mallei (strain ATCC 23344)).